The following is a 445-amino-acid chain: Phosphoglucosamine mutase (445 aa).

Serine 99 (phosphoserine intermediate) is an active-site residue. Mg(2+) contacts are provided by serine 99, aspartate 242, aspartate 244, and aspartate 246. Serine 99 is subject to Phosphoserine.

This sequence belongs to the phosphohexose mutase family. Requires Mg(2+) as cofactor. Post-translationally, activated by phosphorylation.

The enzyme catalyses alpha-D-glucosamine 1-phosphate = D-glucosamine 6-phosphate. Its function is as follows. Catalyzes the conversion of glucosamine-6-phosphate to glucosamine-1-phosphate. The polypeptide is Phosphoglucosamine mutase (Campylobacter jejuni subsp. jejuni serotype O:23/36 (strain 81-176)).